The primary structure comprises 249 residues: uncharacterized protein (249 aa).

This is an uncharacterized protein from Methanocaldococcus jannaschii (strain ATCC 43067 / DSM 2661 / JAL-1 / JCM 10045 / NBRC 100440) (Methanococcus jannaschii).